The following is a 70-amino-acid chain: SPbeta prophage-derived uncharacterized protein YotJ (70 aa).

In Bacillus subtilis (strain 168), this protein is SPbeta prophage-derived uncharacterized protein YotJ (yotJ).